The primary structure comprises 180 residues: Cytokinin-beta-glucosidase 4 (180 aa).

In terms of biological role, hydrolyzes cytokinin glucosides thus liberating free cytokinins. The sequence is that of Cytokinin-beta-glucosidase 4 (ROLC4) from Panax ginseng (Korean ginseng).